We begin with the raw amino-acid sequence, 333 residues long: Ketol-acid reductoisomerase (NADP(+)) (333 aa).

A KARI N-terminal Rossmann domain is found at 2 to 182; sequence AKIFYDSDCN…GASRAGIILT (181 aa). Residues 25 to 28, Ser51, Ser53, and 83 to 86 contribute to the NADP(+) site; these read FGSQ and DEKQ. The active site involves His108. Residue Gly134 coordinates NADP(+). Positions 183–328 constitute a KARI C-terminal knotted domain; that stretch reads TFKEETETDL…KELRKMMPWI (146 aa). Mg(2+)-binding residues include Asp191, Glu195, Glu227, and Glu231. A substrate-binding site is contributed by Ser252.

This sequence belongs to the ketol-acid reductoisomerase family. Mg(2+) is required as a cofactor.

It carries out the reaction (2R)-2,3-dihydroxy-3-methylbutanoate + NADP(+) = (2S)-2-acetolactate + NADPH + H(+). It catalyses the reaction (2R,3R)-2,3-dihydroxy-3-methylpentanoate + NADP(+) = (S)-2-ethyl-2-hydroxy-3-oxobutanoate + NADPH + H(+). The protein operates within amino-acid biosynthesis; L-isoleucine biosynthesis; L-isoleucine from 2-oxobutanoate: step 2/4. Its pathway is amino-acid biosynthesis; L-valine biosynthesis; L-valine from pyruvate: step 2/4. Involved in the biosynthesis of branched-chain amino acids (BCAA). Catalyzes an alkyl-migration followed by a ketol-acid reduction of (S)-2-acetolactate (S2AL) to yield (R)-2,3-dihydroxy-isovalerate. In the isomerase reaction, S2AL is rearranged via a Mg-dependent methyl migration to produce 3-hydroxy-3-methyl-2-ketobutyrate (HMKB). In the reductase reaction, this 2-ketoacid undergoes a metal-dependent reduction by NADPH to yield (R)-2,3-dihydroxy-isovalerate. The chain is Ketol-acid reductoisomerase (NADP(+)) from Caldicellulosiruptor bescii (strain ATCC BAA-1888 / DSM 6725 / KCTC 15123 / Z-1320) (Anaerocellum thermophilum).